Here is a 142-residue protein sequence, read N- to C-terminus: Transcriptional regulator MraZ (142 aa).

2 consecutive SpoVT-AbrB domains span residues 5–47 (EFTH…PLNE) and 76–119 (ATDC…SAER).

The protein belongs to the MraZ family. Forms oligomers.

It is found in the cytoplasm. The protein localises to the nucleoid. This Limosilactobacillus reuteri (strain DSM 20016) (Lactobacillus reuteri) protein is Transcriptional regulator MraZ.